The sequence spans 69 residues: DNA-directed RNA polymerase subunit omega (69 aa).

This sequence belongs to the RNA polymerase subunit omega family. In terms of assembly, the RNAP catalytic core consists of 2 alpha, 1 beta, 1 beta' and 1 omega subunit. When a sigma factor is associated with the core the holoenzyme is formed, which can initiate transcription.

It catalyses the reaction RNA(n) + a ribonucleoside 5'-triphosphate = RNA(n+1) + diphosphate. Functionally, promotes RNA polymerase assembly. Latches the N- and C-terminal regions of the beta' subunit thereby facilitating its interaction with the beta and alpha subunits. The sequence is that of DNA-directed RNA polymerase subunit omega from Exiguobacterium sp. (strain ATCC BAA-1283 / AT1b).